Consider the following 396-residue polypeptide: Ribosomal RNA large subunit methyltransferase I (396 aa).

The 80-residue stretch at 2-81 (SVRLVLAKGR…ESIDIAFFTR (80 aa)) folds into the PUA domain.

The protein belongs to the methyltransferase superfamily. RlmI family.

The protein resides in the cytoplasm. It carries out the reaction cytidine(1962) in 23S rRNA + S-adenosyl-L-methionine = 5-methylcytidine(1962) in 23S rRNA + S-adenosyl-L-homocysteine + H(+). Specifically methylates the cytosine at position 1962 (m5C1962) of 23S rRNA. This is Ribosomal RNA large subunit methyltransferase I from Escherichia coli O127:H6 (strain E2348/69 / EPEC).